The primary structure comprises 338 residues: tRNA N6-adenosine threonylcarbamoyltransferase (338 aa).

Residues H111 and H115 each contribute to the Fe cation site. Residues 134 to 138, D167, G180, and N272 each bind substrate; that span reads LVSGG. D300 is a Fe cation binding site.

Belongs to the KAE1 / TsaD family. Fe(2+) is required as a cofactor.

It is found in the cytoplasm. The enzyme catalyses L-threonylcarbamoyladenylate + adenosine(37) in tRNA = N(6)-L-threonylcarbamoyladenosine(37) in tRNA + AMP + H(+). Required for the formation of a threonylcarbamoyl group on adenosine at position 37 (t(6)A37) in tRNAs that read codons beginning with adenine. Is involved in the transfer of the threonylcarbamoyl moiety of threonylcarbamoyl-AMP (TC-AMP) to the N6 group of A37, together with TsaE and TsaB. TsaD likely plays a direct catalytic role in this reaction. This is tRNA N6-adenosine threonylcarbamoyltransferase from Aliivibrio fischeri (strain MJ11) (Vibrio fischeri).